Reading from the N-terminus, the 106-residue chain is Iron-sulfur cluster assembly protein CyaY (106 aa).

This sequence belongs to the frataxin family.

Involved in iron-sulfur (Fe-S) cluster assembly. May act as a regulator of Fe-S biogenesis. In Salmonella arizonae (strain ATCC BAA-731 / CDC346-86 / RSK2980), this protein is Iron-sulfur cluster assembly protein CyaY.